The chain runs to 368 residues: Methionine import ATP-binding protein MetN (368 aa).

In terms of domain architecture, ABC transporter spans 5-260; it reads IELNNLSVQF…PKEALTKQFI (256 aa). An ATP-binding site is contributed by 41–48; that stretch reads GYSGAGKS.

The protein belongs to the ABC transporter superfamily. Methionine importer (TC 3.A.1.24) family. As to quaternary structure, the complex is composed of two ATP-binding proteins (MetN), two transmembrane proteins (MetI) and a solute-binding protein (MetQ).

Its subcellular location is the cell membrane. The catalysed reaction is L-methionine(out) + ATP + H2O = L-methionine(in) + ADP + phosphate + H(+). The enzyme catalyses D-methionine(out) + ATP + H2O = D-methionine(in) + ADP + phosphate + H(+). Its function is as follows. Part of the ABC transporter complex MetNIQ involved in methionine import. Responsible for energy coupling to the transport system. This chain is Methionine import ATP-binding protein MetN, found in Lactococcus lactis subsp. lactis (strain IL1403) (Streptococcus lactis).